Consider the following 116-residue polypeptide: Ig heavy chain V region 3-6 (116 aa).

The signal sequence occupies residues 1-18; the sequence is MKVLSLLYLLTAIPGILS. Residues 19–48 form a framework-1 region; sequence DVQLQESGPGLVKPSQSLSLTCSVTGYSIT. The cysteines at positions 40 and 114 are disulfide-linked. Positions 49-53 are complementarity-determining-1; the sequence is SGYYW. Positions 54 to 67 are framework-2; sequence NWIRQFPGNKLEWM. Residues 68–84 form a complementarity-determining-2 region; the sequence is GYISYDGSNNYNPSLKN. The interval 85–116 is framework-3; that stretch reads RISITRDTSKNQFFLKLNSVTTEDTATYYCAR.

This chain is Ig heavy chain V region 3-6 (Ighv3-6), found in Mus musculus (Mouse).